A 257-amino-acid polypeptide reads, in one-letter code: DNA repair protein RecO (257 aa).

The protein belongs to the RecO family.

Its function is as follows. Involved in DNA repair and RecF pathway recombination. This Clostridium kluyveri (strain ATCC 8527 / DSM 555 / NBRC 12016 / NCIMB 10680 / K1) protein is DNA repair protein RecO.